We begin with the raw amino-acid sequence, 449 residues long: Glucose-6-phosphate isomerase (449 aa).

Residue glutamate 291 is the Proton donor of the active site. Residues histidine 312 and lysine 426 contribute to the active site.

The protein belongs to the GPI family.

It is found in the cytoplasm. The catalysed reaction is alpha-D-glucose 6-phosphate = beta-D-fructose 6-phosphate. Its pathway is carbohydrate biosynthesis; gluconeogenesis. It participates in carbohydrate degradation; glycolysis; D-glyceraldehyde 3-phosphate and glycerone phosphate from D-glucose: step 2/4. In terms of biological role, catalyzes the reversible isomerization of glucose-6-phosphate to fructose-6-phosphate. In Streptococcus pneumoniae (strain CGSP14), this protein is Glucose-6-phosphate isomerase.